Reading from the N-terminus, the 185-residue chain is Elongation factor P (185 aa).

This sequence belongs to the elongation factor P family.

It is found in the cytoplasm. The protein operates within protein biosynthesis; polypeptide chain elongation. In terms of biological role, involved in peptide bond synthesis. Stimulates efficient translation and peptide-bond synthesis on native or reconstituted 70S ribosomes in vitro. Probably functions indirectly by altering the affinity of the ribosome for aminoacyl-tRNA, thus increasing their reactivity as acceptors for peptidyl transferase. This is Elongation factor P from Halalkalibacterium halodurans (strain ATCC BAA-125 / DSM 18197 / FERM 7344 / JCM 9153 / C-125) (Bacillus halodurans).